The following is a 343-amino-acid chain: Small ribosomal subunit biogenesis GTPase RsgA (343 aa).

In terms of domain architecture, CP-type G spans 116-275 (RGQLKPVAAN…LIDSPGIREF (160 aa)). Residues 163–166 (NKAD) and 217–225 (GQSGVGKSS) each bind GTP. Positions 299, 304, 306, and 312 each coordinate Zn(2+).

It belongs to the TRAFAC class YlqF/YawG GTPase family. RsgA subfamily. In terms of assembly, monomer. Associates with 30S ribosomal subunit, binds 16S rRNA. Zn(2+) is required as a cofactor.

The protein localises to the cytoplasm. In terms of biological role, one of several proteins that assist in the late maturation steps of the functional core of the 30S ribosomal subunit. Helps release RbfA from mature subunits. May play a role in the assembly of ribosomal proteins into the subunit. Circularly permuted GTPase that catalyzes slow GTP hydrolysis, GTPase activity is stimulated by the 30S ribosomal subunit. The sequence is that of Small ribosomal subunit biogenesis GTPase RsgA from Pseudomonas syringae pv. syringae (strain B728a).